The sequence spans 427 residues: 12-alpha,13-alpha-dihydroxyfumitremorgin C prenyltransferase (427 aa).

Glu94 serves as a coordination point for substrate. Dimethylallyl diphosphate contacts are provided by Arg105, Lys192, Tyr194, Tyr268, Gln353, Tyr355, Tyr419, and Tyr423.

It belongs to the tryptophan dimethylallyltransferase family.

It carries out the reaction 12alpha,13alpha-dihydroxyfumitremorgin C + dimethylallyl diphosphate = fumitremorgin B + diphosphate. The protein operates within mycotoxin biosynthesis. 12-alpha,13-alpha-dihydroxyfumitremorgin C prenyltransferase; part of the gene cluster that mediates the biosynthesis of fumitremorgins, indole alkaloids that carry not only intriguing chemical structures, but also interesting biological and pharmacological activities. The biosynthesis of fumitremorgin-type alkaloids begins by condensation of the two amino acids L-tryptophan and L-proline to brevianamide F, catalyzed by the non-ribosomal peptide synthetase ftmA. Brevianamide F is then prenylated by the prenyltransferase ftmPT1/ftmB in the presence of dimethylallyl diphosphate, resulting in the formation of tryprostatin B. The three cytochrome P450 monooxygenases, ftmP450-1/ftmC, ftmP450-2/ftmE and ftmP450-3/FtmG, are responsible for the conversion of tryprostatin B to 6-hydroxytryprostatin B, tryprostatin A to fumitremorgin C and fumitremorgin C to 12,13-dihydroxyfumitremorgin C, respectively. The putative methyltransferase ftmMT/ftmD is expected for the conversion of 6-hydroxytryprostatin B to tryprostatin A. FtmPT2/FtmH catalyzes the prenylation of 12,13-dihydroxyfumitre-morgin C in the presence of dimethylallyl diphosphate, resulting in the formation of fumitremorgin B. Fumitremorgin B is further converted to verruculogen by ftmOx1/ftmF via the insertion of an endoperoxide bond between the two prenyl moieties. In some fungal species, verruculogen is further converted to fumitremorgin A, but the enzymes involved in this step have not been identified yet. In Aspergillus fumigatus (strain ATCC MYA-4609 / CBS 101355 / FGSC A1100 / Af293) (Neosartorya fumigata), this protein is 12-alpha,13-alpha-dihydroxyfumitremorgin C prenyltransferase.